A 591-amino-acid chain; its full sequence is Protein misato homolog 1 (591 aa).

Belongs to the misato family.

The protein resides in the mitochondrion outer membrane. It is found in the cytoplasm. Functionally, involved in the regulation of mitochondrial distribution and morphology. Required for mitochondrial fusion and mitochondrial network formation. The sequence is that of Protein misato homolog 1 (msto1) from Danio rerio (Zebrafish).